A 401-amino-acid chain; its full sequence is 1-deoxy-D-xylulose 5-phosphate reductoisomerase (401 aa).

8 residues coordinate NADPH: threonine 10, glycine 11, serine 12, isoleucine 13, glycine 36, arginine 37, asparagine 38, and asparagine 124. Lysine 125 lines the 1-deoxy-D-xylulose 5-phosphate pocket. Glutamate 126 is an NADPH binding site. Residue aspartate 150 coordinates Mn(2+). Positions 151, 152, 176, and 199 each coordinate 1-deoxy-D-xylulose 5-phosphate. Residue glutamate 152 participates in Mn(2+) binding. Residue glycine 205 coordinates NADPH. Serine 212, asparagine 217, lysine 218, and glutamate 221 together coordinate 1-deoxy-D-xylulose 5-phosphate. Glutamate 221 provides a ligand contact to Mn(2+).

It belongs to the DXR family. The cofactor is Mg(2+). Requires Mn(2+) as cofactor.

It carries out the reaction 2-C-methyl-D-erythritol 4-phosphate + NADP(+) = 1-deoxy-D-xylulose 5-phosphate + NADPH + H(+). Its pathway is isoprenoid biosynthesis; isopentenyl diphosphate biosynthesis via DXP pathway; isopentenyl diphosphate from 1-deoxy-D-xylulose 5-phosphate: step 1/6. Its function is as follows. Catalyzes the NADPH-dependent rearrangement and reduction of 1-deoxy-D-xylulose-5-phosphate (DXP) to 2-C-methyl-D-erythritol 4-phosphate (MEP). The protein is 1-deoxy-D-xylulose 5-phosphate reductoisomerase of Acaryochloris marina (strain MBIC 11017).